Here is a 225-residue protein sequence, read N- to C-terminus: Flagellar transcriptional regulator FlhC (225 aa).

Zn(2+)-binding residues include Cys149, Cys152, Cys169, and Cys172.

Belongs to the FlhC family. As to quaternary structure, heterohexamer composed of two FlhC and four FlhD subunits. Each FlhC binds a FlhD dimer, forming a heterotrimer, and a hexamer assembles by dimerization of two heterotrimers. Zn(2+) serves as cofactor.

It is found in the cytoplasm. Functionally, functions in complex with FlhD as a master transcriptional regulator that regulates transcription of several flagellar and non-flagellar operons by binding to their promoter region. Activates expression of class 2 flagellar genes, including fliA, which is a flagellum-specific sigma factor that turns on the class 3 genes. Also regulates genes whose products function in a variety of physiological pathways. The protein is Flagellar transcriptional regulator FlhC of Burkholderia lata (strain ATCC 17760 / DSM 23089 / LMG 22485 / NCIMB 9086 / R18194 / 383).